The chain runs to 158 residues: Cyclic pyranopterin monophosphate synthase (158 aa).

Residues 75 to 77 (LCH) and 113 to 114 (ME) contribute to the substrate site. Aspartate 128 is a catalytic residue.

The protein belongs to the MoaC family. Homohexamer; trimer of dimers.

The enzyme catalyses (8S)-3',8-cyclo-7,8-dihydroguanosine 5'-triphosphate = cyclic pyranopterin phosphate + diphosphate. It functions in the pathway cofactor biosynthesis; molybdopterin biosynthesis. In terms of biological role, catalyzes the conversion of (8S)-3',8-cyclo-7,8-dihydroguanosine 5'-triphosphate to cyclic pyranopterin monophosphate (cPMP). This chain is Cyclic pyranopterin monophosphate synthase, found in Histophilus somni (strain 2336) (Haemophilus somnus).